Reading from the N-terminus, the 363-residue chain is Putative replication factor C small subunit L510 (363 aa).

47–54 is a binding site for ATP; it reads GPPGTGKT.

This sequence belongs to the activator 1 small subunits family. RfcS subfamily.

Functionally, part of the RFC clamp loader complex which loads the PCNA sliding clamp onto DNA. The chain is Putative replication factor C small subunit L510 from Acanthamoeba polyphaga mimivirus (APMV).